A 444-amino-acid chain; its full sequence is C4-dicarboxylate transport protein (444 aa).

The next 8 membrane-spanning stretches (helical) occupy residues 19 to 39 (HLYFQVIVAIIGGILLGHFYP), 55 to 75 (LVKMVIAPVIFLTVATGIAGM), 90 to 110 (IYFLCFSTLALVVGMLVSNIL), 161 to 181 (ILQVLFFSVLFGLALAMVGDL), 199 to 219 (LVAILMKAAPIGAFGAMAFTI), 230 to 250 (LAFLIGTFYLTSLLFVLVVLG), 343 to 363 (LLLVAMLSSKGAAGITGAGFI), and 366 to 386 (AATLSVVPSVPVAGMALILGI).

Belongs to the dicarboxylate/amino acid:cation symporter (DAACS) (TC 2.A.23) family.

It is found in the cell inner membrane. In terms of biological role, responsible for the transport of dicarboxylates such as succinate, fumarate, and malate from the periplasm across the membrane. The polypeptide is C4-dicarboxylate transport protein (Allorhizobium ampelinum (strain ATCC BAA-846 / DSM 112012 / S4) (Agrobacterium vitis (strain S4))).